The primary structure comprises 91 residues: YcgL domain-containing protein ESA_01460 (91 aa).

The YcgL domain maps to 1-85; it reads MFCVIYRSAR…PPENLLKQHL (85 aa).

The protein is YcgL domain-containing protein ESA_01460 of Cronobacter sakazakii (strain ATCC BAA-894) (Enterobacter sakazakii).